Reading from the N-terminus, the 534-residue chain is Peptide chain release factor 3 (534 aa).

One can recognise a tr-type G domain in the interval 9–278 (SRRRTFAIIS…FFVEHAPPPQ (270 aa)). GTP is bound by residues 18–25 (SHPDAGKT), 86–90 (DTPGH), and 140–143 (NKLD).

It belongs to the TRAFAC class translation factor GTPase superfamily. Classic translation factor GTPase family. PrfC subfamily.

It localises to the cytoplasm. Functionally, increases the formation of ribosomal termination complexes and stimulates activities of RF-1 and RF-2. It binds guanine nucleotides and has strong preference for UGA stop codons. It may interact directly with the ribosome. The stimulation of RF-1 and RF-2 is significantly reduced by GTP and GDP, but not by GMP. The polypeptide is Peptide chain release factor 3 (Stenotrophomonas maltophilia (strain R551-3)).